The primary structure comprises 356 residues: A-type ATP synthase subunit C (356 aa).

The protein belongs to the V-ATPase V0D/AC39 subunit family. In terms of assembly, has multiple subunits with at least A(3), B(3), C, D, E, F, H, I and proteolipid K(x).

Its subcellular location is the cell membrane. Functionally, component of the A-type ATP synthase that produces ATP from ADP in the presence of a proton gradient across the membrane. The polypeptide is A-type ATP synthase subunit C (Thermoplasma acidophilum (strain ATCC 25905 / DSM 1728 / JCM 9062 / NBRC 15155 / AMRC-C165)).